The sequence spans 131 residues: Ribonuclease P protein component (131 aa).

The protein belongs to the RnpA family. In terms of assembly, consists of a catalytic RNA component (M1 or rnpB) and a protein subunit.

It catalyses the reaction Endonucleolytic cleavage of RNA, removing 5'-extranucleotides from tRNA precursor.. Functionally, RNaseP catalyzes the removal of the 5'-leader sequence from pre-tRNA to produce the mature 5'-terminus. It can also cleave other RNA substrates such as 4.5S RNA. The protein component plays an auxiliary but essential role in vivo by binding to the 5'-leader sequence and broadening the substrate specificity of the ribozyme. The protein is Ribonuclease P protein component of Acinetobacter baylyi (strain ATCC 33305 / BD413 / ADP1).